Reading from the N-terminus, the 389-residue chain is Putative teichuronic acid biosynthesis glycosyltransferase TuaC (389 aa).

Belongs to the glycosyltransferase group 1 family. Glycosyltransferase 4 subfamily.

It functions in the pathway cell wall biogenesis; teichuronic acid biosynthesis. The chain is Putative teichuronic acid biosynthesis glycosyltransferase TuaC (tuaC) from Bacillus subtilis (strain 168).